A 605-amino-acid polypeptide reads, in one-letter code: Zinc metalloproteinase-disintegrin-like BfMP (605 aa).

An N-terminal signal peptide occupies residues Met-1–Ser-11. A propeptide spanning residues Ile-12–Thr-179 is cleaved from the precursor. Asn-178 and Asn-215 each carry an N-linked (GlcNAc...) asparagine glycan. Positions Lys-196–Pro-392 constitute a Peptidase M12B domain. Intrachain disulfides connect Cys-307–Cys-387, Cys-347–Cys-371, Cys-350–Cys-355, Cys-403–Cys-432, Cys-414–Cys-427, Cys-416–Cys-422, Cys-426–Cys-449, Cys-440–Cys-446, Cys-445–Cys-471, Cys-458–Cys-478, Cys-465–Cys-497, Cys-490–Cys-502, Cys-509–Cys-559, Cys-524–Cys-567, Cys-537–Cys-547, Cys-554–Cys-593, and Cys-587–Cys-598. A Zn(2+)-binding site is contributed by His-332. The active site involves Glu-333. Residues His-336 and His-342 each coordinate Zn(2+). The 87-residue stretch at Pro-400–Asn-486 folds into the Disintegrin domain. The D/ECD-tripeptide signature appears at Asp-464–Asp-466.

Belongs to the venom metalloproteinase (M12B) family. P-III subfamily. P-IIIa sub-subfamily. In terms of assembly, monomer. The cofactor is Zn(2+). As to expression, expressed by the venom gland.

The protein resides in the secreted. Snake venom zinc metalloproteinase that inhibits platelet aggregation and degrades fibrinogen. This Bungarus fasciatus (Banded krait) protein is Zinc metalloproteinase-disintegrin-like BfMP.